Consider the following 476-residue polypeptide: MEEPFLLRDELLVPSQVTWHTNPLTVELKRVSRLAAPMATVTIAQYLLPVISVMVAGHNGELQLSGVALANSFTNVTGFSIMCGLVGALETLCGQAYGAKQYEKIGTYAYSAIASNIPICFLISILWLYIEKILISLGQDPEISRIAGSYAFWLIPALFGQAIVIPLSRFLLTQGLVIPLLFTAVTTLLFHVLVCWTLVFLFGLGCNGPAMATSVSFWFYAVILSCYVRFSSSCEKTRGFVSRDFVSSIKQFFQYGIPSAAMICLEWWLFEILILCSGLLPNPKLETSVLSICLTIETLHYVISAGVAAAVSTRVSNNLGAGNPQVARVSVLAGLCLWIVESAFFSILLFTCRNIIGYAFSNSKEVLDYVADLTPLLCLSFILDGFTAVLNGVARGSGWQHIGAWNNTVSYYLVGAPVGIYLAFSRELNGKGLWCGVVVGSTVQATILAIVTASINWKEQAEKARKRIVSTENRLA.

The next 12 membrane-spanning stretches (helical) occupy residues 35–55 (AAPMATVTIAQYLLPVISVMV), 66–86 (GVALANSFTNVTGFSIMCGLV), 117–137 (IPICFLISILWLYIEKILISL), 146–166 (IAGSYAFWLIPALFGQAIVIP), 184–204 (AVTTLLFHVLVCWTLVFLFGL), 208–228 (GPAMATSVSFWFYAVILSCYV), 260–280 (AAMICLEWWLFEILILCSGLL), 289–309 (VLSICLTIETLHYVISAGVAA), 331–351 (VLAGLCLWIVESAFFSILLFT), 370–390 (VADLTPLLCLSFILDGFTAVL), 402–422 (IGAWNNTVSYYLVGAPVGIYL), and 433–453 (LWCGVVVGSTVQATILAIVTA).

The protein belongs to the multi antimicrobial extrusion (MATE) (TC 2.A.66.1) family. In terms of tissue distribution, ubiquitous. Highest expression in flowers and stems.

Its subcellular location is the cell membrane. Efflux carrier for plant-derived alkaloids, antibiotics, heavy metal and other toxic compounds. Involved in cadmium detoxification. Requires probably a proton-motive force for the efflux. This is Protein DETOXIFICATION 1 from Arabidopsis thaliana (Mouse-ear cress).